The following is a 253-amino-acid chain: Phosphate import ATP-binding protein PstB (253 aa).

An ABC transporter domain is found at 7–248; sequence IKVRDLNLYY…PRDRRTEDYI (242 aa). 39-46 contributes to the ATP binding site; the sequence is GPSGCGKS.

The protein belongs to the ABC transporter superfamily. Phosphate importer (TC 3.A.1.7) family. The complex is composed of two ATP-binding proteins (PstB), two transmembrane proteins (PstC and PstA) and a solute-binding protein (PstS).

The protein resides in the cell membrane. It carries out the reaction phosphate(out) + ATP + H2O = ADP + 2 phosphate(in) + H(+). Part of the ABC transporter complex PstSACB involved in phosphate import. Responsible for energy coupling to the transport system. The sequence is that of Phosphate import ATP-binding protein PstB from Carboxydothermus hydrogenoformans (strain ATCC BAA-161 / DSM 6008 / Z-2901).